Consider the following 301-residue polypeptide: Alpha-ketoglutarate-dependent sulfate ester dioxygenase (301 aa).

A substrate-binding site is contributed by His-81. Positions 108 and 110 each coordinate Fe cation. Position 111 (Val-111) interacts with substrate. Thr-135 contacts 2-oxoglutarate. His-264 contributes to the Fe cation binding site. 2 residues coordinate 2-oxoglutarate: Arg-275 and Arg-279.

This sequence belongs to the TfdA dioxygenase family. In terms of assembly, homotetramer. The cofactor is Fe(2+).

It catalyses the reaction a primary linear alkyl sulfate ester + 2-oxoglutarate + O2 = an aldehyde + sulfate + succinate + CO2 + H(+). The enzyme catalyses 2-ethylhexyl sulfate + 2-oxoglutarate + O2 = 2-ethylhexanal + sulfate + succinate + CO2 + H(+). The catalysed reaction is decyl sulfate + 2-oxoglutarate + O2 = decanal + sulfate + succinate + CO2 + H(+). It carries out the reaction hexyl sulfate + 2-oxoglutarate + O2 = hexanal + sulfate + succinate + CO2 + H(+). It catalyses the reaction nonyl sufate + 2-oxoglutarate + O2 = nonanal + sulfate + succinate + CO2 + H(+). With respect to regulation, strongly stimulated by ascorbate. Its function is as follows. Catalyzes the oxygenolytic cleavage of 2-ethylhexyl sulfate (2-EHS) in the presence of alpha-ketoglutarate to yield 2-ethyl-hexanal and succinate, the decarboxylated form of alpha-ketoglutarate. It can accept a wide range of alpha-keto acids including 2-oxo-valerate, 2-oxo-adipate, 2-oxo-octanoate, 3-methyl-2-oxo-butyrate, oxaloacetate-alpha-ketoadipate, and alpha-ketooctanoate. It can catalyze the cleavage of medium-chain alkyl sulfate esters such as butylsulfate, pentylsulfate, hexylsulfate, heptylsulfate, octylsulfate, nonylsulfate, decylsulfate and sodium dodecyl sulfate (SDS). This chain is Alpha-ketoglutarate-dependent sulfate ester dioxygenase, found in Pseudomonas putida (Arthrobacter siderocapsulatus).